A 257-amino-acid chain; its full sequence is Deoxyribose-phosphate aldolase (257 aa).

Asp-102 acts as the Proton donor/acceptor in catalysis. The Schiff-base intermediate with acetaldehyde role is filled by Lys-166. The active-site Proton donor/acceptor is Lys-198.

Belongs to the DeoC/FbaB aldolase family. DeoC type 2 subfamily.

It is found in the cytoplasm. It catalyses the reaction 2-deoxy-D-ribose 5-phosphate = D-glyceraldehyde 3-phosphate + acetaldehyde. The protein operates within carbohydrate degradation; 2-deoxy-D-ribose 1-phosphate degradation; D-glyceraldehyde 3-phosphate and acetaldehyde from 2-deoxy-alpha-D-ribose 1-phosphate: step 2/2. In terms of biological role, catalyzes a reversible aldol reaction between acetaldehyde and D-glyceraldehyde 3-phosphate to generate 2-deoxy-D-ribose 5-phosphate. This chain is Deoxyribose-phosphate aldolase, found in Shewanella piezotolerans (strain WP3 / JCM 13877).